The primary structure comprises 69 residues: Guanine nucleotide-binding protein G(I)/G(S)/G(O) subunit gamma-T2 (69 aa).

A Cysteine methyl ester modification is found at Cys-66. Cys-66 carries S-farnesyl cysteine lipidation. The propeptide at 67–69 (LIS) is removed in mature form.

This sequence belongs to the G protein gamma family. In terms of assembly, g proteins are composed of 3 units, alpha, beta and gamma. In terms of tissue distribution, retinal cones.

Its subcellular location is the cell membrane. Functionally, guanine nucleotide-binding proteins (G proteins) are involved as a modulator or transducer in various transmembrane signaling systems. The beta and gamma chains are required for the GTPase activity, for replacement of GDP by GTP, and for G protein-effector interaction. In Homo sapiens (Human), this protein is Guanine nucleotide-binding protein G(I)/G(S)/G(O) subunit gamma-T2 (GNGT2).